A 72-amino-acid chain; its full sequence is Translational regulator CsrA (72 aa).

The protein belongs to the CsrA/RsmA family. As to quaternary structure, homodimer; the beta-strands of each monomer intercalate to form a hydrophobic core, while the alpha-helices form wings that extend away from the core.

The protein resides in the cytoplasm. Functionally, a translational regulator that binds mRNA to regulate translation initiation and/or mRNA stability. Usually binds in the 5'-UTR at or near the Shine-Dalgarno sequence preventing ribosome-binding, thus repressing translation. Its main target seems to be the major flagellin gene, while its function is anatagonized by FliW. The chain is Translational regulator CsrA from Clostridium botulinum (strain ATCC 19397 / Type A).